The chain runs to 232 residues: Large ribosomal subunit protein uL1 (232 aa).

This sequence belongs to the universal ribosomal protein uL1 family. Part of the 50S ribosomal subunit.

Its function is as follows. Binds directly to 23S rRNA. The L1 stalk is quite mobile in the ribosome, and is involved in E site tRNA release. Functionally, protein L1 is also a translational repressor protein, it controls the translation of the L11 operon by binding to its mRNA. This is Large ribosomal subunit protein uL1 from Paraburkholderia phymatum (strain DSM 17167 / CIP 108236 / LMG 21445 / STM815) (Burkholderia phymatum).